The primary structure comprises 1325 residues: Protein suppressor of sable (1325 aa).

Disordered regions lie at residues Met-1–Gln-36 and Val-74–Asn-326. Over residues Pro-9–Gln-30 the composition is skewed to acidic residues. Polar residues predominate over residues Arg-119–Glu-131. A highly charged region spans residues Ala-138–Arg-327. Positions Ser-149 to Glu-158 are enriched in basic residues. Residues Ser-149–Asp-179 are a coiled coil. Residues Arg-159–Asn-178 are compositionally biased toward basic and acidic residues. Residues Ala-236–Tyr-246 are compositionally biased toward gly residues. The stretch at Asn-276–Glu-296 forms a coiled coil. 2 consecutive C3H1-type zinc fingers follow at residues Pro-330–Phe-357 and Pro-358–Pro-381. Residues Lys-444 to Asp-478 adopt a coiled-coil conformation. A compositionally biased stretch (basic and acidic residues) spans Lys-499–Gly-509. Disordered regions lie at residues Lys-499–His-535, Lys-588–Gly-622, Phe-639–Phe-695, Ser-710–Gly-745, Ala-780–Pro-835, Asp-979–Lys-1058, Glu-1143–Val-1170, and Arg-1295–Ile-1325. Residue Ser-524 is modified to Phosphoserine. Positions Pro-594–Pro-606 are enriched in polar residues. Thr-604 carries the post-translational modification Phosphothreonine. Residues Pro-644 to Asp-668 show a composition bias toward acidic residues. At Ser-663 the chain carries Phosphoserine. Position 664 is a phosphothreonine (Thr-664). The span at Ser-710–Asn-726 shows a compositional bias: polar residues. The span at Ser-790–Ser-800 shows a compositional bias: low complexity. Pro residues predominate over residues Ser-1003–Asn-1015. A compositionally biased stretch (basic and acidic residues) spans Pro-1021–Arg-1033. The segment covering Gly-1042 to Gly-1056 has biased composition (low complexity). Gly residues-rich tracts occupy residues Ala-1149 to Val-1170 and Arg-1295 to Asn-1309.

It belongs to the suppressor of sable family. In terms of assembly, interacts with Wdr82.

Its subcellular location is the nucleus. It localises to the chromosome. Functionally, RNA-binding protein that suppresses transcription of some RNAs. Together with Wdr82, part of a transcription termination checkpoint that promotes transcription termination of RNAs and their subsequent degradation by the nuclear exosome. Promotes transcription termination of aberrant RNAs, transcripts from genes containing a transposon inserted at their very 5' end or RNAs from heat-shock-inducible repetitive element. Binds RNA preferentially at a sequence that resembles a cryptic 5'-splice site. In Drosophila melanogaster (Fruit fly), this protein is Protein suppressor of sable.